Consider the following 194-residue polypeptide: Interferon alpha (194 aa).

The N-terminal stretch at 1-23 is a signal peptide; sequence MALPSSFLVALVALGCNSVCSLG. 2 disulfides stabilise this stretch: C24-C123 and C52-C166. The N-linked (GlcNAc...) asparagine glycan is linked to N102.

The protein belongs to the alpha/beta interferon family.

The protein resides in the secreted. In terms of biological role, produced by macrophages, IFN-alpha have antiviral activities. Interferon stimulates the production of two enzymes: a protein kinase and an oligoadenylate synthetase. This Felis catus (Cat) protein is Interferon alpha.